Reading from the N-terminus, the 455-residue chain is Retinoic acid receptor beta (455 aa).

Residues 1–87 are modulating; the sequence is MTTSSRTCPV…PLPPPRVYKP (87 aa). Positions 44–78 are disordered; the sequence is LQSHPPTSGCSTPSPATVETQSTSSEELVPSPPSP. Polar residues predominate over residues 47-66; that stretch reads HPPTSGCSTPSPATVETQST. NR C4-type zinc fingers lie at residues 88–108 and 124–148; these read CFVC…CEGC and CHRD…LQKC. Positions 88-153 form a DNA-binding region, nuclear receptor; the sequence is CFVCQDKSSG…RLQKCFEVGM (66 aa). Residues 154 to 182 are hinge; that stretch reads SKESVRNDRNKKKKEPTKQESTENYEMTA. The 235-residue stretch at 183 to 417 folds into the NR LBD domain; it reads ELDDLTEKIR…PLIQEMLENS (235 aa). The disordered stretch occupies residues 416 to 455; that stretch reads NSEGHEPLTPTSNGNTAEHSPSISPSSVDNSSVSQSPMVQ. Residues 424–434 show a composition bias toward polar residues; it reads TPTSNGNTAEH. A compositionally biased stretch (low complexity) spans 435 to 455; sequence SPSISPSSVDNSSVSQSPMVQ.

Belongs to the nuclear hormone receptor family. NR1 subfamily. As to quaternary structure, heterodimer; with a RXR molecule. Binds DNA preferentially as a RAR/RXR heterodimer.

It is found in the nucleus. Its function is as follows. Receptor for retinoic acid. Retinoic acid receptors bind as heterodimers to their target response elements in response to their ligands, all-trans or 9-cis retinoic acid, and regulate gene expression in various biological processes. The RAR/RXR heterodimers bind to the retinoic acid response elements (RARE) composed of tandem 5'-AGGTCA-3' sites known as DR1-DR5. Required for limb and craniofacial development. The polypeptide is Retinoic acid receptor beta (RARB) (Gallus gallus (Chicken)).